Here is a 438-residue protein sequence, read N- to C-terminus: Elongation factor 1-alpha (438 aa).

Residues 6–229 form the tr-type G domain; that stretch reads KPHLNIVIIG…ALDTLEVPPK (224 aa). The interval 15-22 is G1; sequence GHVDHGKS. GTP is bound at residue 15–22; sequence GHVDHGKS. Position 22 (Ser22) interacts with Mg(2+). The tract at residues 71-75 is G2; it reads GVTIS. The segment at 92–95 is G3; it reads DAPG. Residues 92 to 96 and 154 to 157 contribute to the GTP site; these read DAPGH and NKMD. Residues 154 to 157 form a G4 region; sequence NKMD. Residues 195–197 are G5; that stretch reads SAW.

This sequence belongs to the TRAFAC class translation factor GTPase superfamily. Classic translation factor GTPase family. EF-Tu/EF-1A subfamily.

It is found in the cytoplasm. The enzyme catalyses GTP + H2O = GDP + phosphate + H(+). In terms of biological role, GTP hydrolase that promotes the GTP-dependent binding of aminoacyl-tRNA to the A-site of ribosomes during protein biosynthesis. The sequence is that of Elongation factor 1-alpha from Desulfurococcus mucosus (Desulfurococcus mobilis).